Here is a 114-residue protein sequence, read N- to C-terminus: Hydrogenase maturation factor HypA (114 aa).

Histidine 2 is a binding site for Ni(2+). Residues cysteine 73, cysteine 76, cysteine 90, and cysteine 93 each contribute to the Zn(2+) site.

It belongs to the HypA/HybF family.

Functionally, involved in the maturation of [NiFe] hydrogenases. Required for nickel insertion into the metal center of the hydrogenase. The protein is Hydrogenase maturation factor HypA of Chloroflexus aggregans (strain MD-66 / DSM 9485).